Here is a 348-residue protein sequence, read N- to C-terminus: Lipooligosaccharide heptosyltransferase 2 (348 aa).

The protein belongs to the glycosyltransferase 9 family.

It carries out the reaction an L-alpha-D-Hep-(1-&gt;5)-[alpha-Kdo-(2-&gt;4)]-alpha-Kdo-(2-&gt;6)-lipid A + ADP-L-glycero-beta-D-manno-heptose = an L-alpha-D-Hep-(1-&gt;3)-L-alpha-D-Hep-(1-&gt;5)-[alpha-Kdo-(2-&gt;4)]-alpha-Kdo-(2-&gt;6)-lipid A + ADP + H(+). The protein operates within bacterial outer membrane biogenesis; LOS core biosynthesis. Functionally, glycosyltransferase involved in the biosynthesis of the core oligosaccharide region of lipooligosaccharide (LOS). Catalyzes the addition of a heptose unit to the heptosyl-Kdo2-lipid A module. In Haemophilus ducreyi (strain 35000HP / ATCC 700724), this protein is Lipooligosaccharide heptosyltransferase 2.